A 213-amino-acid polypeptide reads, in one-letter code: Penicillin-binding protein activator LpoB (213 aa).

A signal peptide spans 1 to 19 (MMKMNRYALVAALAIFLSG). Cys-20 carries N-palmitoyl cysteine lipidation. Residue Cys-20 is the site of S-diacylglycerol cysteine attachment. A disordered region spans residues 26-71 (PAPVDEVKPAPEQPAEPQQPVPVVPSVPTIPQQPGPIEHEDQTAQP). The span at 36–50 (PEQPAEPQQPVPVVP) shows a compositional bias: pro residues.

Belongs to the LpoB family. In terms of assembly, interacts with PBP1b.

The protein resides in the cell outer membrane. Its function is as follows. Regulator of peptidoglycan synthesis that is essential for the function of penicillin-binding protein 1B (PBP1b). The polypeptide is Penicillin-binding protein activator LpoB (Citrobacter koseri (strain ATCC BAA-895 / CDC 4225-83 / SGSC4696)).